The primary structure comprises 96 residues: Cytochrome b (96 aa).

3 consecutive transmembrane segments (helical) span residues 1–15, 39–60, and 75–95; these read LCXI…FLAM, WLIR…YLHI, and WNVG…GYVL. The heme b site is built by His-45 and His-59.

It belongs to the cytochrome b family. In terms of assembly, the cytochrome bc1 complex contains 3 respiratory subunits (MT-CYB, CYC1 and UQCRFS1), 2 core proteins (UQCRC1 and UQCRC2) and probably 6 low-molecular weight proteins. Requires heme b as cofactor.

The protein resides in the mitochondrion inner membrane. Component of the ubiquinol-cytochrome c reductase complex (complex III or cytochrome b-c1 complex) that is part of the mitochondrial respiratory chain. The b-c1 complex mediates electron transfer from ubiquinol to cytochrome c. Contributes to the generation of a proton gradient across the mitochondrial membrane that is then used for ATP synthesis. The protein is Cytochrome b (mt-cyb) of Geophagus steindachneri (Red hump earth eater).